A 326-amino-acid chain; its full sequence is Malate dehydrogenase (326 aa).

11 to 17 contributes to the NAD(+) binding site; the sequence is GAAGQIG. Residues arginine 92 and arginine 98 each coordinate substrate. NAD(+) contacts are provided by residues asparagine 105, glutamine 112, and 129–131; that span reads VGN. Positions 131 and 162 each coordinate substrate. The active-site Proton acceptor is the histidine 187.

It belongs to the LDH/MDH superfamily. MDH type 2 family.

The enzyme catalyses (S)-malate + NAD(+) = oxaloacetate + NADH + H(+). Its function is as follows. Catalyzes the reversible oxidation of malate to oxaloacetate. The chain is Malate dehydrogenase from Leptospira borgpetersenii serovar Hardjo-bovis (strain JB197).